The following is a 132-amino-acid chain: Putative holo-[acyl-carrier-protein] synthase (132 aa).

Mg(2+) is bound by residues D6 and E67.

Belongs to the P-Pant transferase superfamily. AcpS family.

The catalysed reaction is apo-[ACP] + CoA = holo-[ACP] + adenosine 3',5'-bisphosphate + H(+). Functionally, transfers the 4'-phosphopantetheine moiety from coenzyme A to a Ser of acyl-carrier-protein. This is Putative holo-[acyl-carrier-protein] synthase (new8) from Schizosaccharomyces pombe (strain 972 / ATCC 24843) (Fission yeast).